The chain runs to 110 residues: Class I hydrophobin 2 (110 aa).

The N-terminal stretch at 1-17 (MQFKFLTTVALATLAVA) is a signal peptide. 4 disulfides stabilise this stretch: cysteine 28–cysteine 89, cysteine 36–cysteine 83, cysteine 37–cysteine 71, and cysteine 90–cysteine 103. Asparagine 57 carries an N-linked (GlcNAc...) asparagine glycan.

The protein belongs to the fungal hydrophobin family. In terms of assembly, self-assembles to form functional amyloid fibrils called rodlets. Self-assembly into fibrillar rodlets occurs spontaneously at hydrophobic:hydrophilic interfaces and the rodlets further associate laterally to form amphipathic monolayers.

The protein localises to the secreted. Its subcellular location is the cell wall. Aerial growth, conidiation, and dispersal of filamentous fungi in the environment rely upon a capability of their secreting small amphipathic proteins called hydrophobins (HPBs) with low sequence identity. Class I can self-assemble into an outermost layer of rodlet bundles on aerial cell surfaces, conferring cellular hydrophobicity that supports fungal growth, development and dispersal; whereas Class II form highly ordered films at water-air interfaces through intermolecular interactions but contribute nothing to the rodlet structure. CoH2 is an asexual monokaryon-specific class I hydrophobin that is involved in aerial growth of mycelia. This chain is Class I hydrophobin 2, found in Coprinopsis cinerea (Inky cap fungus).